A 94-amino-acid chain; its full sequence is Antitoxin HipB (94 aa).

The HTH cro/C1-type domain occupies 23–77; the sequence is MKLVRQQNGWTQSELAKKIGIKQATISNFENNPDNTSLTTFFKILQSLELSMTLC. The H-T-H motif DNA-binding region spans 34-53; sequence QSELAKKIGIKQATISNFEN.

As to quaternary structure, homodimer. Forms a HipA(2)HipB(2) heterotetramer which can interact with DNA. This complex also blocks the toxic activity of HipA.

In terms of biological role, antitoxin component of a type II type II toxin-antitoxin (TA) system. Neutralizes the toxic effect of cognate toxin HipA. Represses the hipBA operon promoter. The sequence is that of Antitoxin HipB (hipB) from Escherichia coli O6:H1 (strain CFT073 / ATCC 700928 / UPEC).